Consider the following 66-residue polypeptide: Stress-induced protein KIN1 (66 aa).

Residues 1–13 (MSETNKNAFQAGQ) are compositionally biased toward polar residues. The disordered stretch occupies residues 1–52 (MSETNKNAFQAGQTAGKAEEKSNVLLDKAKDAAAGAGAGAQQAGKSVSDAAA). Basic and acidic residues predominate over residues 17-31 (KAEEKSNVLLDKAKD). 2 repeats span residues 31–35 (DAAAG) and 49–53 (DAAAG). The span at 32–45 (AAAGAGAGAQQAGK) shows a compositional bias: low complexity.

The protein is Stress-induced protein KIN1 (KIN1) of Arabidopsis thaliana (Mouse-ear cress).